A 468-amino-acid polypeptide reads, in one-letter code: RuvB-like helicase 2 (468 aa).

76 to 83 (GPPSTGKT) provides a ligand contact to ATP.

It belongs to the RuvB family. In terms of assembly, may form heterododecamers with RVB1. Component of the SWR1 chromatin remodeling complex, the INO80 chromatin remodeling complex, and of the R2TP complex.

Its subcellular location is the nucleus. The enzyme catalyses ATP + H2O = ADP + phosphate + H(+). DNA helicase which participates in several chromatin remodeling complexes, including the SWR1 and the INO80 complexes. The SWR1 complex mediates the ATP-dependent exchange of histone H2A for the H2A variant HZT1 leading to transcriptional regulation of selected genes by chromatin remodeling. The INO80 complex remodels chromatin by shifting nucleosomes and is involved in DNA repair. Also involved in pre-rRNA processing. This is RuvB-like helicase 2 (rvb2) from Emericella nidulans (strain FGSC A4 / ATCC 38163 / CBS 112.46 / NRRL 194 / M139) (Aspergillus nidulans).